The sequence spans 100 residues: Large ribosomal subunit protein uL23 (100 aa).

It belongs to the universal ribosomal protein uL23 family. In terms of assembly, part of the 50S ribosomal subunit. Contacts protein L29, and trigger factor when it is bound to the ribosome.

In terms of biological role, one of the early assembly proteins it binds 23S rRNA. One of the proteins that surrounds the polypeptide exit tunnel on the outside of the ribosome. Forms the main docking site for trigger factor binding to the ribosome. The polypeptide is Large ribosomal subunit protein uL23 (Salmonella paratyphi A (strain ATCC 9150 / SARB42)).